A 187-amino-acid polypeptide reads, in one-letter code: Cytochrome b-245 chaperone 1 (187 aa).

The helical transmembrane segment at 20-42 threads the bilayer; that stretch reads GIRSWSLLVGILSIGLAAAYYSG. S168 carries the phosphoserine modification.

The protein belongs to the CYBC1 family. In terms of assembly, interacts with CYBB; CYBC1 may act as a chaperone stabilizing Cytochrome b-245 heterodimer. Highly expressed in macrophages, neutrophils and monocytes.

The protein localises to the endoplasmic reticulum membrane. In terms of biological role, functions as a chaperone necessary for a stable expression of the CYBA and CYBB subunits of the cytochrome b-245 heterodimer. Controls the phagocyte respiratory burst and is essential for innate immunity. This chain is Cytochrome b-245 chaperone 1, found in Homo sapiens (Human).